A 219-amino-acid chain; its full sequence is Cytidylate kinase (219 aa).

21–29 (GPAASGKGT) lines the ATP pocket.

Belongs to the cytidylate kinase family. Type 1 subfamily.

It localises to the cytoplasm. It carries out the reaction CMP + ATP = CDP + ADP. The catalysed reaction is dCMP + ATP = dCDP + ADP. This chain is Cytidylate kinase, found in Rickettsia conorii (strain ATCC VR-613 / Malish 7).